A 195-amino-acid chain; its full sequence is Transmembrane protein 126A (195 aa).

Topologically, residues 1–33 (MENHKSNNKENITIVDISRKINQLPEAERNLLE) are mitochondrial matrix. A helical membrane pass occupies residues 34–54 (NGSVYVGLNAALCGLIANSLF). Residues 55–56 (RR) are Mitochondrial intermembrane-facing. The helical transmembrane segment at 57–77 (ILNVTKARIAAGLPMAGIPFL) threads the bilayer. Residues 78–110 (TTDLTYRCFVSFPLNTGDLDCETCTITRSGLTG) are Mitochondrial matrix-facing. Residues 111–131 (LVIGGLYPVFLAIPVNGGLAA) form a helical membrane-spanning segment. Over 132–158 (RYQSALLPHKGNILSYWIRTSKPVFRK) the chain is Mitochondrial intermembrane. The helical transmembrane segment at 159–175 (MLFPILLQTMFSAYLGS) threads the bilayer. The Mitochondrial matrix portion of the chain corresponds to 176–195 (EQYKLLIKALQLSEPGKEIH).

The protein belongs to the TMEM126 family. Interacts with OXA1L; promoting cotranslational quality control in mitochondria. As to expression, strongly expressed in brain, cerebellum, skeletal muscle, testis. High expression also found in fetal brain, fetal retinal pigmentary epithelium, and fetal retina. Highly expressed in retinal ganglion cells.

The protein resides in the mitochondrion inner membrane. Protein required for the cotranslational protein quality control in the inner membrane of the mitochondria. Associates with newly synthesized polypeptides and may act as a chaperone that cooperates with OXA1L for the insertion of newly synthesized mitochondrial proteins into the inner membrane. Required for the assembly of the ND4 module of mitochondrial complex I. In Homo sapiens (Human), this protein is Transmembrane protein 126A.